A 513-amino-acid polypeptide reads, in one-letter code: Cytochrome P450 94A2 (513 aa).

The helical transmembrane segment at 7–24 (ISWLLFSTSLFWFLFLAT) threads the bilayer. Position 455 (Cys-455) interacts with heme.

Belongs to the cytochrome P450 family. Heme is required as a cofactor. Weakly expressed in seedlings.

It localises to the endoplasmic reticulum membrane. Catalyzes the omega-hydroxylation of various fatty acids (FA). The substrate specificity is higher for myristate &gt; laurate = palmitate (C14&gt;C16=C12). This is Cytochrome P450 94A2 (CYP94A2) from Vicia sativa (Spring vetch).